A 268-amino-acid chain; its full sequence is Thymidylate synthase (268 aa).

A dUMP-binding site is contributed by Arg27. His57 provides a ligand contact to (6R)-5,10-methylene-5,6,7,8-tetrahydrofolate. Residue 132–133 (RR) coordinates dUMP. Cys152 serves as the catalytic Nucleophile. DUMP-binding positions include 172-175 (RSAD), Asn183, and 213-215 (HVY). Asp175 is a (6R)-5,10-methylene-5,6,7,8-tetrahydrofolate binding site. Ala267 is a binding site for (6R)-5,10-methylene-5,6,7,8-tetrahydrofolate.

Belongs to the thymidylate synthase family. Bacterial-type ThyA subfamily. Homodimer.

It is found in the cytoplasm. The enzyme catalyses dUMP + (6R)-5,10-methylene-5,6,7,8-tetrahydrofolate = 7,8-dihydrofolate + dTMP. The protein operates within pyrimidine metabolism; dTTP biosynthesis. Its function is as follows. Catalyzes the reductive methylation of 2'-deoxyuridine-5'-monophosphate (dUMP) to 2'-deoxythymidine-5'-monophosphate (dTMP) while utilizing 5,10-methylenetetrahydrofolate (mTHF) as the methyl donor and reductant in the reaction, yielding dihydrofolate (DHF) as a by-product. This enzymatic reaction provides an intracellular de novo source of dTMP, an essential precursor for DNA biosynthesis. The protein is Thymidylate synthase of Kineococcus radiotolerans (strain ATCC BAA-149 / DSM 14245 / SRS30216).